The chain runs to 153 residues: Carbohydrate-binding protein AWN (153 aa).

A signal peptide spans 1 to 20 (MKLAAPSLALLLSTATLVSG). Position 21 is an N-acetylalanine (A21). 2 disulfides stabilise this stretch: C29-C50 and C73-C94. The CUB domain occupies 29 to 130 (CGGVLRDPPG…SPFHIYYYAD (102 aa)). Positions 93 to 130 (ICGGISLVFRSSSNIATIKYLRTSGQRASPFHIYYYAD) are heparin-binding.

The protein belongs to the spermadhesin family. In terms of processing, partial N-acetylation differentiates isoforms AWN-1 (not acetylated) and AWN-2 (acetylated).

The protein resides in the secreted. Its function is as follows. AWN proteins mediate the binding of boar spermatozoa to component(s) of the egg's zona pellucida by a carbohydrate-binding mechanism. Awn proteins are secretory components of the male accessory glands being coated to the sperm surface at the time of ejaculation. They possess as well heparin-, serine-protease-inhibitor-binding capability. This is Carbohydrate-binding protein AWN from Sus scrofa (Pig).